The following is a 184-amino-acid chain: MSRIAKKPIVLPTNVQLSITDSEIKVKGPKGELKLNNHPFVSIKVEGNEVWVTPNLEVAKRKADERKFKAMVGTYWRLIRNMVLGVTEGFKKELEIVGVGYRAQLQGNKLIMNLGYAHQVEFDVPADVKVEVPAPNKIIVSGIDKQRVGQVAADIRKWREPNPYSGKGIKYVDEVLKLKEGKKA.

Belongs to the universal ribosomal protein uL6 family. In terms of assembly, part of the 50S ribosomal subunit.

In terms of biological role, this protein binds to the 23S rRNA, and is important in its secondary structure. It is located near the subunit interface in the base of the L7/L12 stalk, and near the tRNA binding site of the peptidyltransferase center. This is Large ribosomal subunit protein uL6 from Fervidobacterium nodosum (strain ATCC 35602 / DSM 5306 / Rt17-B1).